We begin with the raw amino-acid sequence, 139 residues long: Protein shisa-5 (139 aa).

The helical transmembrane segment at Phe3 to Leu23 threads the bilayer.

This sequence belongs to the shisa family.

The protein localises to the endoplasmic reticulum membrane. It localises to the nucleus membrane. Its function is as follows. Can induce apoptosis in a caspase-dependent manner and plays a role in p53/TP53-dependent apoptosis. In Gallus gallus (Chicken), this protein is Protein shisa-5 (Shisa5).